A 93-amino-acid chain; its full sequence is UPF0223 protein SAG0995 (93 aa).

Belongs to the UPF0223 family.

This is UPF0223 protein SAG0995 from Streptococcus agalactiae serotype V (strain ATCC BAA-611 / 2603 V/R).